A 604-amino-acid polypeptide reads, in one-letter code: Glutamine--fructose-6-phosphate aminotransferase [isomerizing] (604 aa).

Cys-2 serves as the catalytic Nucleophile; for GATase activity. One can recognise a Glutamine amidotransferase type-2 domain in the interval 2–216 (CGIVGYVGFR…DGDVVRLTRE (215 aa)). 2 consecutive SIS domains span residues 281 to 420 (LALD…ARGA) and 453 to 594 (VAEK…VDQP). Lys-599 acts as the For Fru-6P isomerization activity in catalysis.

In terms of assembly, homodimer.

The protein localises to the cytoplasm. It catalyses the reaction D-fructose 6-phosphate + L-glutamine = D-glucosamine 6-phosphate + L-glutamate. In terms of biological role, catalyzes the first step in hexosamine metabolism, converting fructose-6P into glucosamine-6P using glutamine as a nitrogen source. This is Glutamine--fructose-6-phosphate aminotransferase [isomerizing] from Thermus thermophilus (strain ATCC BAA-163 / DSM 7039 / HB27).